The sequence spans 125 residues: Protein ApaG (125 aa).

In terms of domain architecture, ApaG spans 1-125; the sequence is MADSPRVCVQ…FRLAVPTLIH (125 aa).

The protein is Protein ApaG of Cronobacter sakazakii (strain ATCC BAA-894) (Enterobacter sakazakii).